Consider the following 94-residue polypeptide: Small ribosomal subunit protein uS19 (94 aa).

The protein belongs to the universal ribosomal protein uS19 family.

Protein S19 forms a complex with S13 that binds strongly to the 16S ribosomal RNA. This chain is Small ribosomal subunit protein uS19, found in Desulforudis audaxviator (strain MP104C).